Consider the following 491-residue polypeptide: Protein nucleotidyltransferase YdiU (491 aa).

Glycine 94, glycine 96, arginine 97, lysine 117, aspartate 129, glycine 130, arginine 180, and arginine 187 together coordinate ATP. The active-site Proton acceptor is aspartate 256. Mg(2+) is bound by residues asparagine 257 and aspartate 266. Aspartate 266 lines the ATP pocket.

Belongs to the SELO family. It depends on Mg(2+) as a cofactor. The cofactor is Mn(2+).

The enzyme catalyses L-seryl-[protein] + ATP = 3-O-(5'-adenylyl)-L-seryl-[protein] + diphosphate. The catalysed reaction is L-threonyl-[protein] + ATP = 3-O-(5'-adenylyl)-L-threonyl-[protein] + diphosphate. It carries out the reaction L-tyrosyl-[protein] + ATP = O-(5'-adenylyl)-L-tyrosyl-[protein] + diphosphate. It catalyses the reaction L-histidyl-[protein] + UTP = N(tele)-(5'-uridylyl)-L-histidyl-[protein] + diphosphate. The enzyme catalyses L-seryl-[protein] + UTP = O-(5'-uridylyl)-L-seryl-[protein] + diphosphate. The catalysed reaction is L-tyrosyl-[protein] + UTP = O-(5'-uridylyl)-L-tyrosyl-[protein] + diphosphate. In terms of biological role, nucleotidyltransferase involved in the post-translational modification of proteins. It can catalyze the addition of adenosine monophosphate (AMP) or uridine monophosphate (UMP) to a protein, resulting in modifications known as AMPylation and UMPylation. This is Protein nucleotidyltransferase YdiU from Alkaliphilus metalliredigens (strain QYMF).